We begin with the raw amino-acid sequence, 343 residues long: Holliday junction branch migration complex subunit RuvB (343 aa).

The segment at 4–184 (SDRLISAKAG…FGIVQRLEFY (181 aa)) is large ATPase domain (RuvB-L). ATP-binding positions include I23, R24, G65, K68, T69, T70, 131 to 133 (EDY), R174, Y184, and R221. T69 is a Mg(2+) binding site. Residues 185 to 255 (NHQDLTHIIT…IADQALNMLK (71 aa)) are small ATPAse domain (RuvB-S). Residues 258–343 (SQGFDHMDRR…RSGREDDLFE (86 aa)) form a head domain (RuvB-H) region. The DNA site is built by R294, R313, and R318.

It belongs to the RuvB family. In terms of assembly, homohexamer. Forms an RuvA(8)-RuvB(12)-Holliday junction (HJ) complex. HJ DNA is sandwiched between 2 RuvA tetramers; dsDNA enters through RuvA and exits via RuvB. An RuvB hexamer assembles on each DNA strand where it exits the tetramer. Each RuvB hexamer is contacted by two RuvA subunits (via domain III) on 2 adjacent RuvB subunits; this complex drives branch migration. In the full resolvosome a probable DNA-RuvA(4)-RuvB(12)-RuvC(2) complex forms which resolves the HJ.

Its subcellular location is the cytoplasm. The enzyme catalyses ATP + H2O = ADP + phosphate + H(+). The RuvA-RuvB-RuvC complex processes Holliday junction (HJ) DNA during genetic recombination and DNA repair, while the RuvA-RuvB complex plays an important role in the rescue of blocked DNA replication forks via replication fork reversal (RFR). RuvA specifically binds to HJ cruciform DNA, conferring on it an open structure. The RuvB hexamer acts as an ATP-dependent pump, pulling dsDNA into and through the RuvAB complex. RuvB forms 2 homohexamers on either side of HJ DNA bound by 1 or 2 RuvA tetramers; 4 subunits per hexamer contact DNA at a time. Coordinated motions by a converter formed by DNA-disengaged RuvB subunits stimulates ATP hydrolysis and nucleotide exchange. Immobilization of the converter enables RuvB to convert the ATP-contained energy into a lever motion, pulling 2 nucleotides of DNA out of the RuvA tetramer per ATP hydrolyzed, thus driving DNA branch migration. The RuvB motors rotate together with the DNA substrate, which together with the progressing nucleotide cycle form the mechanistic basis for DNA recombination by continuous HJ branch migration. Branch migration allows RuvC to scan DNA until it finds its consensus sequence, where it cleaves and resolves cruciform DNA. This is Holliday junction branch migration complex subunit RuvB from Marinobacter nauticus (strain ATCC 700491 / DSM 11845 / VT8) (Marinobacter aquaeolei).